Reading from the N-terminus, the 907-residue chain is Protein translocase subunit SecA (907 aa).

ATP-binding positions include Gln-87, 105 to 109 (GEGKT), and Asp-512. The disordered stretch occupies residues 870 to 897 (AALAATQPQVREGEKVGRNDPCPCGSGK). Residues Cys-891, Cys-893, Cys-902, and His-903 each contribute to the Zn(2+) site.

This sequence belongs to the SecA family. In terms of assembly, monomer and homodimer. Part of the essential Sec protein translocation apparatus which comprises SecA, SecYEG and auxiliary proteins SecDF-YajC and YidC. It depends on Zn(2+) as a cofactor.

The protein resides in the cell inner membrane. Its subcellular location is the cytoplasm. The enzyme catalyses ATP + H2O + cellular proteinSide 1 = ADP + phosphate + cellular proteinSide 2.. Its function is as follows. Part of the Sec protein translocase complex. Interacts with the SecYEG preprotein conducting channel. Has a central role in coupling the hydrolysis of ATP to the transfer of proteins into and across the cell membrane, serving both as a receptor for the preprotein-SecB complex and as an ATP-driven molecular motor driving the stepwise translocation of polypeptide chains across the membrane. This is Protein translocase subunit SecA from Shewanella piezotolerans (strain WP3 / JCM 13877).